The sequence spans 184 residues: MDKFLIDVTVEIPKSSKIKYEYDRKTSQIRVDRILFGSESYPQNYGFIANTLDWDGDELDCFIFADQAFLPGVVVPTRIVGALEMVDDGELDTKLLGVIDCDPRYKEINSVNDLPKHRVDEIIGFLKTYKLLQKKEVIIKGVQSLEWAKKEYQVCVDLMKQYGKLPKDEFIAKMQKLHPEHYQK.

Substrate-binding residues include Lys-19, Arg-33, and Tyr-45. Residues Asp-55, Asp-60, and Asp-92 each coordinate Mg(2+). Tyr-129 lines the substrate pocket.

The protein belongs to the PPase family. In terms of assembly, homohexamer. Mg(2+) is required as a cofactor.

The protein resides in the cytoplasm. It catalyses the reaction diphosphate + H2O = 2 phosphate + H(+). Catalyzes the hydrolysis of inorganic pyrophosphate (PPi) forming two phosphate ions. The protein is Inorganic pyrophosphatase of Mycoplasma pneumoniae (strain ATCC 29342 / M129 / Subtype 1) (Mycoplasmoides pneumoniae).